A 200-amino-acid polypeptide reads, in one-letter code: Small ribosomal subunit protein uS4 (200 aa).

Residues Thr22–Lys42 form a disordered region. The 61-residue stretch at Ala92–Lys152 folds into the S4 RNA-binding domain.

The protein belongs to the universal ribosomal protein uS4 family. As to quaternary structure, part of the 30S ribosomal subunit. Contacts protein S5. The interaction surface between S4 and S5 is involved in control of translational fidelity.

Functionally, one of the primary rRNA binding proteins, it binds directly to 16S rRNA where it nucleates assembly of the body of the 30S subunit. Its function is as follows. With S5 and S12 plays an important role in translational accuracy. This chain is Small ribosomal subunit protein uS4, found in Bacillus mycoides (strain KBAB4) (Bacillus weihenstephanensis).